A 498-amino-acid polypeptide reads, in one-letter code: Neoxanthin synthase, chloroplastic (498 aa).

A chloroplast-targeting transit peptide spans 1–42; it reads METLLKPFPSLLLSSPTPYRSIVQQNPSFLSPTTKKKSRKCL.

It belongs to the lycopene cyclase family. As to expression, expressed exclusively in chromoplast-containing tissues of flowers and fruits. Expressed in preanthesis flowers.

The protein resides in the plastid. The protein localises to the chloroplast. It catalyses the reaction all-trans-violaxanthin = all-trans-neoxanthin. The enzyme catalyses a carotenoid psi-end group = a carotenoid beta-end derivative. The protein operates within carotenoid biosynthesis; neoxanthin biosynthesis. It functions in the pathway carotenoid biosynthesis; beta-carotene biosynthesis. Functionally, involved in the synthesis of neoxanthin, the last product of carotenoid synthesis and a precursor of abscisic acid. Involved in the beta-carotene biosynthesis. The protein is Neoxanthin synthase, chloroplastic of Solanum lycopersicum (Tomato).